A 464-amino-acid chain; its full sequence is ATP-dependent protease ATPase subunit HslU (464 aa).

Residues Val-18, 60 to 65, Asp-277, Glu-342, and Arg-414 contribute to the ATP site; that span reads GVGKTE.

Belongs to the ClpX chaperone family. HslU subfamily. As to quaternary structure, a double ring-shaped homohexamer of HslV is capped on each side by a ring-shaped HslU homohexamer. The assembly of the HslU/HslV complex is dependent on binding of ATP.

It is found in the cytoplasm. ATPase subunit of a proteasome-like degradation complex; this subunit has chaperone activity. The binding of ATP and its subsequent hydrolysis by HslU are essential for unfolding of protein substrates subsequently hydrolyzed by HslV. HslU recognizes the N-terminal part of its protein substrates and unfolds these before they are guided to HslV for hydrolysis. This is ATP-dependent protease ATPase subunit HslU from Lactobacillus delbrueckii subsp. bulgaricus (strain ATCC 11842 / DSM 20081 / BCRC 10696 / JCM 1002 / NBRC 13953 / NCIMB 11778 / NCTC 12712 / WDCM 00102 / Lb 14).